The chain runs to 380 residues: Guanine nucleotide-binding protein subunit beta (380 aa).

WD repeat units follow at residues 64 to 94 (GHSGKVYSLDWTPEKNWIVSASQDGRLIVWN), 106 to 136 (LHCPWVMACAFAPNGQSVACGGLDSACSIFN), 155 to 186 (GHKGYVSSCQYVPDQETRLITSSGDQTCVLWD), 203 to 234 (GHTADVQSVSINSSNTNMFVSGSCDTTVRLWD), 247 to 277 (GHEDDVNSVKFFPDGHRFGTGSDDGTCRLFD), 296 to 326 (NELPTVTSIAFSISGRLLFAGYSNGDCYVWD), and 342 to 372 (SHDGRISCLGMSSDGSALCTGSWDKNLKIWA).

The protein belongs to the WD repeat G protein beta family. In terms of assembly, g proteins are composed of 3 units, alpha, beta and gamma. Present in the root, leaf and tassel.

In terms of biological role, guanine nucleotide-binding proteins (G proteins) are involved as a modulator or transducer in various transmembrane signaling systems. The beta and gamma chains are required for the GTPase activity, for replacement of GDP by GTP, and for G protein-effector interaction. This chain is Guanine nucleotide-binding protein subunit beta (GB1), found in Zea mays (Maize).